The primary structure comprises 159 residues: Ribosomal RNA large subunit methyltransferase H (159 aa).

Residues Leu-76, Gly-108, and 127–132 (FSKMTF) each bind S-adenosyl-L-methionine.

It belongs to the RNA methyltransferase RlmH family. In terms of assembly, homodimer.

The protein resides in the cytoplasm. The enzyme catalyses pseudouridine(1915) in 23S rRNA + S-adenosyl-L-methionine = N(3)-methylpseudouridine(1915) in 23S rRNA + S-adenosyl-L-homocysteine + H(+). Specifically methylates the pseudouridine at position 1915 (m3Psi1915) in 23S rRNA. This chain is Ribosomal RNA large subunit methyltransferase H, found in Geobacillus sp. (strain WCH70).